Reading from the N-terminus, the 508-residue chain is Putative inorganic phosphate transporter 1-13 (508 aa).

At 1–22 (MAGNQQLRVLHALDIARTQLYH) the chain is on the cytoplasmic side. A helical transmembrane segment spans residues 23–43 (FIAIVIAGMGFFTDAYDLFSI). The Extracellular segment spans residues 44–64 (SLVADLLGHVYYHGELPRNIH). Residues 65 to 85 (AAVTGIALCGTVPGQLVFGWL) form a helical membrane-spanning segment. Residues 86–93 (GDKMGRKR) lie on the Cytoplasmic side of the membrane. Residues 94–114 (VYGITLLLMVVSSLASGLSFS) form a helical membrane-spanning segment. The Extracellular portion of the chain corresponds to 115–117 (KHE). Residues 118–138 (GMNIIAVLCFFRFWLGVSIGG) traverse the membrane as a helical segment. The Cytoplasmic portion of the chain corresponds to 139 to 159 (DYPLSATIMSEYANKRTRGAF). The helical transmembrane segment at 160–180 (IAAVFAMQGFGNLAAGIIGMI) threads the bilayer. Over 181–192 (VSAAFKHSSASK) the chain is Extracellular. A helical transmembrane segment spans residues 193–213 (IDYAWRIILMFGAIPAALTYH). The Cytoplasmic segment spans residues 214 to 277 (WRMKMPETAR…FEFLHRHGLH (64 aa)). A helical transmembrane segment spans residues 278–298 (LLGTTVCWFVLDVTFYSLNIF). Topologically, residues 299 to 328 (MKNIFTEVGLLPRLDSEYHHTLQRMITMTA) are extracellular. A helical membrane pass occupies residues 329–349 (VHTFISLCGALPGYFFTVAFV). The Cytoplasmic portion of the chain corresponds to 350 to 354 (DRIGR). The helical transmembrane segment at 355–375 (VKIQLIGFTMMTVFMLCLAIP) threads the bilayer. The Extracellular segment spans residues 376–389 (YDQWLRHKNKYGFA). The helical transmembrane segment at 390 to 410 (VMYGLTFFFANFGPNTTTFII) threads the bilayer. Topologically, residues 411–424 (PAEIFPARLRSTCH) are cytoplasmic. A helical transmembrane segment spans residues 425–445 (GISGAVGKIGAIVGVFGFLYT). At 446 to 450 (EYHIR) the chain is on the extracellular side. The helical transmembrane segment at 451–471 (IFLFVLIGCNLVGFIFTLLLP) threads the bilayer. The Cytoplasmic portion of the chain corresponds to 472–508 (ESKGKSLEDLTGEIEEFQEEDEGSEVALSRPIHTVPL).

Belongs to the major facilitator superfamily. Phosphate:H(+) symporter (TC 2.A.1.9) family.

It is found in the membrane. Its function is as follows. High-affinity transporter for external inorganic phosphate. This Oryza sativa subsp. japonica (Rice) protein is Putative inorganic phosphate transporter 1-13 (PHT1-13).